Here is a 1692-residue protein sequence, read N- to C-terminus: MVGELRYREFRVPLGPGLHAYPDELIRQRVGHNGHPEYQIRWLILRRGDDGDSSQVDCKAEHILLWMTDDEIYANCHKMLGEDGQVIRPSQESAEAGALDKSVLGEMETDVKSLIQRALRQLEECVGAVPPAPLLHTVHVLSAYASIEPLTGVFKDRRVLDLVMHMLSSPDYQIRWSAGRMIQALSSHDAGTRTQILLSLSQQEAIEKHLDFDSRCALLALFAQATLTEHPMSFEGVQLPQVPGRLLFSLVKRYLCVTFLLDRLNGNAEDQDAQNNFIPEELNAGRGRVELEFSMAMGTLISELVQAMRWDWASSRSESSSPIFQPPPTEFFRPRAQRFRRSRRFRPRTAFASVNTYALYVRDTLRPGMRVRMLEDFEEISAGDEGQFRQSNDGMPPVQVLWDSTGHTYWVHWHMLEILGFEEDIEDVVDIDDQGAMVHGGLGVAPPFQHWKPIAQLFAEPYVVPEEEDREEREHLTQAEWWELFFFIKKLNAEERQHVVELLQEFLEGEHVLDFEILPELTVPVELAQDLMLSLPQQLDDSALRDLFNCYVYRKYGPEVLVGKRNRPFVLDDQLNLFRIETDSEAQDPPSQSASPALRQLVEGLGPSGKLLVDLERALSSEAPQENEVKPCLLQLQEEPQPFLTLMRSLDTPASNKALHLTALRILMQLVNFPEALLLPWHEAMDACMTCLRSPNTDREVLQELIFFLHRLTSTSRDYAVILNQLGARDAISKVLEKHRGKLELAQELRDMVFKCEKHAHLYRKLTTNILGGCIQMVLGQIEDHRRTHRPIQIPFFDVFLRYLCQGSSAEVKKNKYWEKVEVSSNPHRASRLTDRNAKTYWESNGTAGSHFITVHMRPGVLIRQLTLLVAGEDSSYMPAWVVVCGGDSISSVNTELNAVNVMPHASRVILLENLTRFWPIVQIRIKRCQQGGINTRIRGLEVLGPKPTFWPVFREQLCRHTRLFYMVRAQAWSQDIAEDRRSLLHLSSRLNGALRQEQNFADRFLPDEEAALALSKTCWEALVSPLVQNITSPDEDSTSSLGWLLNQYLECREAAYNPQSRAAAFSSRVRHLTHLLVHVEPCEAAPPVVAISQSKGRNRSHDWSSLTTRGLPSSIMRNLTRCWRSVVEEQVNKFLTSSWKDDDFVPRYCERYYILQKSSSELFGPRAAFLLAMRNGCADALLRLPFLRAAHVSEQFARHIDQRIQGSRMGGARGMEMLAQLQRCLESVLILSPLEIATTFEHYYQHYMADRLLSVGSSWLEGAVLEQIGPCFPGRLPQQMLQTLNISEELQRRFHVYQLQQLDQELLKLEDTEKKIQVAHEDSGKEHKSKKEDAAGETAAVAMADEEEEEGKKEEGEEEEGEGEEELEEEEERYYEGTMPEVCVLVLSPRFWPVASVCHMLNPTTCLPSYLRGTINHYSNFYSKSQSHSGLEKESPRQLQWTWQGRAEVQFGDQILHVSTVQMWLLLHLNHLKAVSVESLQALSELPPEVLNKAIGPLTSSRGPLDLQEQKNIPGGVLKIRDDSEEPRPRRGNVWLIPPQTYLKAEDEEGRNLEKRRNLLNCLVVRILKAHGDEGLHIDQLVHLVLEAWEKGPCPPRGLVSSLGRGAACRSSDVLSCILHLLGKGTLRRHDDRPQMLFYAVPITVMEPHTESLNPGSSGPNPPLTFHTLQIRSRGVPYASCTGTQTFSTFR.

The CPH domain occupies 348-421; sequence RTAFASVNTY…HWHMLEILGF (74 aa). The 180-residue stretch at 791–970 folds into the DOC domain; the sequence is PIQIPFFDVF…HTRLFYMVRA (180 aa). Residues 1319-1335 are compositionally biased toward basic and acidic residues; sequence VAHEDSGKEHKSKKEDA. Residues 1319–1374 are disordered; that stretch reads VAHEDSGKEHKSKKEDAAGETAAVAMADEEEEEGKKEEGEEEEGEGEEELEEEEER. Acidic residues predominate over residues 1357–1374; that stretch reads GEEEEGEGEEELEEEEER. Residue Lys1570 forms a Glycyl lysine isopeptide (Lys-Gly) (interchain with G-Cter in NEDD8) linkage.

This sequence belongs to the cullin family. Component of the 3M complex, composed of core components CUL7, CCDC8 and OBSL1. Component of the Cul7-RING(FBXW8) complex consisting of CUL7, RBX1, SKP1 and FBXW8. Within the Cul7-RING(FBXW8) complex interacts with FBXW8 and RBX1, but not with SKP1. Interacts with CUL1 (via the C-terminal domain); the interaction seems to be mediated by FBXW8; it is likely specific to FBXW8, but not other F-box proteins. Interacts (via the CPH domain) with p53/TP53; the interaction preferentially involves tetrameric and dimeric p53/TP53; this interaction recruits p53/TP53 for ubiquitination by neddylated CUL1-RBX1. The CUL7-CUL9 heterodimer seems to interact specifically with p53/TP53. Interacts with FBXW8; interaction is mutually exclusive of binding to CUL9 or p53/TP53. Interacts with CUL9; leading to inhibited CUL9 activity. Interacts with OBSL1. Interacts (as part of the 3M complex) with HDAC4 and HDAC5; it is negatively regulated by ANKRA2.

The protein resides in the cytoplasm. It localises to the cytoskeleton. The protein localises to the microtubule organizing center. It is found in the centrosome. Its subcellular location is the perinuclear region. The protein resides in the golgi apparatus. It functions in the pathway protein modification; protein ubiquitination. In terms of biological role, core component of the 3M and Cul7-RING(FBXW8) complexes, which mediate the ubiquitination and subsequent proteasomal degradation of target proteins. Core component of the 3M complex, a complex required to regulate microtubule dynamics and genome integrity. It is unclear how the 3M complex regulates microtubules, it could act by controlling the level of a microtubule stabilizer. The Cul7-RING(FBXW8) complex alone lacks ubiquitination activity and does not promote polyubiquitination and proteasomal degradation of p53/TP53. However it mediates recruitment of p53/TP53 for ubiquitination by neddylated CUL1-RBX1. Interaction with CUL9 is required to inhibit CUL9 activity and ubiquitination of BIRC5. The Cul7-RING(FBXW8) complex also mediates ubiquitination and consequent degradation of target proteins such as GORASP1, IRS1 and MAP4K1/HPK1. Ubiquitination of GORASP1 regulates Golgi morphogenesis and dendrite patterning in brain. Mediates ubiquitination and degradation of IRS1 in a mTOR-dependent manner: the Cul7-RING(FBXW8) complex recognizes and binds IRS1 previously phosphorylated by S6 kinase (RPS6KB1 or RPS6KB2). The Cul7-RING(FBXW8) complex also mediates ubiquitination of MAP4K1/HPK1: recognizes and binds autophosphorylated MAP4K1/HPK1, leading to its degradation, thereby affecting cell proliferation and differentiation. Acts as a regulator in trophoblast cell epithelial-mesenchymal transition and placental development. While the Cul7-RING(FBXW8) and the 3M complexes are associated and involved in common processes, CUL7 and the Cul7-RING(FBXW8) complex may have additional functions. Probably plays a role in the degradation of proteins involved in endothelial proliferation and/or differentiation. In Rattus norvegicus (Rat), this protein is Cullin-7 (Cul7).